Here is a 173-residue protein sequence, read N- to C-terminus: Crossover junction endodeoxyribonuclease RuvC (173 aa).

Catalysis depends on residues D8, E67, and D139. D8, E67, and D139 together coordinate Mg(2+).

It belongs to the RuvC family. In terms of assembly, homodimer which binds Holliday junction (HJ) DNA. The HJ becomes 2-fold symmetrical on binding to RuvC with unstacked arms; it has a different conformation from HJ DNA in complex with RuvA. In the full resolvosome a probable DNA-RuvA(4)-RuvB(12)-RuvC(2) complex forms which resolves the HJ. The cofactor is Mg(2+).

The protein localises to the cytoplasm. The enzyme catalyses Endonucleolytic cleavage at a junction such as a reciprocal single-stranded crossover between two homologous DNA duplexes (Holliday junction).. In terms of biological role, the RuvA-RuvB-RuvC complex processes Holliday junction (HJ) DNA during genetic recombination and DNA repair. Endonuclease that resolves HJ intermediates. Cleaves cruciform DNA by making single-stranded nicks across the HJ at symmetrical positions within the homologous arms, yielding a 5'-phosphate and a 3'-hydroxyl group; requires a central core of homology in the junction. The consensus cleavage sequence is 5'-(A/T)TT(C/G)-3'. Cleavage occurs on the 3'-side of the TT dinucleotide at the point of strand exchange. HJ branch migration catalyzed by RuvA-RuvB allows RuvC to scan DNA until it finds its consensus sequence, where it cleaves and resolves the cruciform DNA. In Salmonella arizonae (strain ATCC BAA-731 / CDC346-86 / RSK2980), this protein is Crossover junction endodeoxyribonuclease RuvC.